Here is a 220-residue protein sequence, read N- to C-terminus: Flavin-dependent thymidylate synthase (220 aa).

Residues 1-208 (MKIDILDKGF…PWTFEAFLKY (208 aa)) enclose the ThyX domain. Residues Thr55, 78 to 80 (RHR), and Glu86 contribute to the FAD site. Residues 75–78 (QWFR), 86–90 (ELSGR), and Arg147 contribute to the dUMP site. The ThyX motif signature appears at 78-88 (RHRIASYNELS). FAD-binding positions include 163 to 165 (NAR) and Asn169. Arg174 is a dUMP binding site. Arg174 acts as the Involved in ionization of N3 of dUMP, leading to its activation in catalysis.

The protein belongs to the thymidylate synthase ThyX family. Homotetramer. Requires FAD as cofactor.

The enzyme catalyses dUMP + (6R)-5,10-methylene-5,6,7,8-tetrahydrofolate + NADPH + H(+) = dTMP + (6S)-5,6,7,8-tetrahydrofolate + NADP(+). It functions in the pathway pyrimidine metabolism; dTTP biosynthesis. Its function is as follows. Catalyzes the reductive methylation of 2'-deoxyuridine-5'-monophosphate (dUMP) to 2'-deoxythymidine-5'-monophosphate (dTMP) while utilizing 5,10-methylenetetrahydrofolate (mTHF) as the methyl donor, and NADPH and FADH(2) as the reductant. This Thermotoga sp. (strain RQ2) protein is Flavin-dependent thymidylate synthase.